The following is a 446-amino-acid chain: D-inositol 3-phosphate glycosyltransferase (446 aa).

Residue His-19 coordinates 1D-myo-inositol 3-phosphate. UDP-N-acetyl-alpha-D-glucosamine-binding positions include 25–26 and Gly-33; that span reads QP. 1D-myo-inositol 3-phosphate-binding positions include 30 to 35, Lys-88, Tyr-121, Thr-145, and Arg-165; that span reads DAGGMN. UDP-N-acetyl-alpha-D-glucosamine contacts are provided by Arg-239, Lys-244, and Gln-303. Residues Tyr-312, Arg-313, and Ser-315 each contribute to the Mg(2+) site. UDP-N-acetyl-alpha-D-glucosamine contacts are provided by Glu-325 and Glu-333. Thr-339 lines the Mg(2+) pocket.

This sequence belongs to the glycosyltransferase group 1 family. MshA subfamily. In terms of assembly, homodimer.

The catalysed reaction is 1D-myo-inositol 3-phosphate + UDP-N-acetyl-alpha-D-glucosamine = 1D-myo-inositol 2-acetamido-2-deoxy-alpha-D-glucopyranoside 3-phosphate + UDP + H(+). Catalyzes the transfer of a N-acetyl-glucosamine moiety to 1D-myo-inositol 3-phosphate to produce 1D-myo-inositol 2-acetamido-2-deoxy-glucopyranoside 3-phosphate in the mycothiol biosynthesis pathway. The chain is D-inositol 3-phosphate glycosyltransferase from Rhodococcus opacus (strain B4).